Reading from the N-terminus, the 342-residue chain is tRNA N6-adenosine threonylcarbamoyltransferase (342 aa).

Residues His111 and His115 each coordinate Fe cation. Residues 134 to 138 (LVSGG), Asp167, Gly180, and Asn277 contribute to the substrate site. Position 305 (Asp305) interacts with Fe cation.

This sequence belongs to the KAE1 / TsaD family. The cofactor is Fe(2+).

Its subcellular location is the cytoplasm. It catalyses the reaction L-threonylcarbamoyladenylate + adenosine(37) in tRNA = N(6)-L-threonylcarbamoyladenosine(37) in tRNA + AMP + H(+). Its function is as follows. Required for the formation of a threonylcarbamoyl group on adenosine at position 37 (t(6)A37) in tRNAs that read codons beginning with adenine. Is involved in the transfer of the threonylcarbamoyl moiety of threonylcarbamoyl-AMP (TC-AMP) to the N6 group of A37, together with TsaE and TsaB. TsaD likely plays a direct catalytic role in this reaction. The protein is tRNA N6-adenosine threonylcarbamoyltransferase of Haemophilus influenzae (strain ATCC 51907 / DSM 11121 / KW20 / Rd).